Reading from the N-terminus, the 548-residue chain is MAAKEVKFGNTARQKMLKGVNILADSVKVTLGPKGRNVVLDKSYGSPVITKDGVSVAKEIELEDKFENMGAQMVKEVASKANDEAGDGTTTATVLAQAIVNEGLKSVAAGMNPMDLKRGIDKAVIAAVEELKKISQPCADSKAIAQVATISANADHTIGEIIAQAMDKVGQEGVITVEEGQALTDELDVVEGMQFDRGYLSPYFINNQESGSVELDNPFILLIDKKISNIRELLPVLEGVSKAGKPLLIIAEDVEGEALATLVVNNMRGIVKVAAVKAPGFGDRRKAMLQDIAVLTGGTVVSEEIGMELEKTQLEDLGTAKRVVITKDNTTVVDGNGDDTAIDGRVNQIKQQMEDTTSDYDREKLQERLAKLAGGVAVIKVGAATEMEMKEKKARVEDALHATRAAVEEGVVPGGGVALVRAASKLAELRGDNEEQNVGIRLALRAMEAPLRQIAMNAGAEGSVVANNVRAGEGNYGYNAGNDTYGDMLEMGILDPTKVTRSALQFAASVGALMITTEAMIADIPQDDNAGGMPGGDMGGMGGMGGMM.

ATP is bound by residues threonine 30–proline 33, lysine 51, aspartate 87–threonine 91, glycine 415, and aspartate 495.

The protein belongs to the chaperonin (HSP60) family. In terms of assembly, forms a cylinder of 14 subunits composed of two heptameric rings stacked back-to-back. Interacts with the co-chaperonin GroES.

The protein resides in the cytoplasm. It catalyses the reaction ATP + H2O + a folded polypeptide = ADP + phosphate + an unfolded polypeptide.. Functionally, together with its co-chaperonin GroES, plays an essential role in assisting protein folding. The GroEL-GroES system forms a nano-cage that allows encapsulation of the non-native substrate proteins and provides a physical environment optimized to promote and accelerate protein folding. This chain is Chaperonin GroEL, found in Idiomarina loihiensis (strain ATCC BAA-735 / DSM 15497 / L2-TR).